Consider the following 553-residue polypeptide: Rhodopsin kinase GRK7 (553 aa).

Serine 36 is modified (phosphoserine; by PKA). Residues 56 to 176 form the RGS domain; it reads FNSLCEQQPI…LVSPFYDKFL (121 aa). In terms of domain architecture, Protein kinase spans 191–454; it reads FEEFRVLGKG…SDDPRKHHFF (264 aa). ATP-binding positions include 197–205 and lysine 220; that span reads LGKGGFGEV. Residue aspartate 316 is the Proton acceptor of the active site. Residues 455–520 form the AGC-kinase C-terminal domain; the sequence is KTINFPRLEA…GAVPIAWQEE (66 aa). Cysteine 550 carries the post-translational modification Cysteine methyl ester. A lipid anchor (S-geranylgeranyl cysteine) is attached at cysteine 550. Positions 551-553 are cleaved as a propeptide — removed in mature form; the sequence is LLL.

Belongs to the protein kinase superfamily. AGC Ser/Thr protein kinase family. GPRK subfamily. As to quaternary structure, interacts (when prenylated) with PDE6D; this promotes release from membranes. In terms of processing, autophosphorylated in vitro at Ser-490. Phosphorylation at Ser-36 is regulated by light and activated by cAMP.

The protein resides in the membrane. The enzyme catalyses L-threonyl-[rhodopsin] + ATP = O-phospho-L-threonyl-[rhodopsin] + ADP + H(+). The catalysed reaction is L-seryl-[rhodopsin] + ATP = O-phospho-L-seryl-[rhodopsin] + ADP + H(+). Its activity is regulated as follows. Inhibited by phosphorylation of Ser-36. In terms of biological role, retina-specific kinase involved in the shutoff of the photoresponse and adaptation to changing light conditions via cone opsin phosphorylation, including rhodopsin (RHO). The protein is Rhodopsin kinase GRK7 (GRK7) of Sus scrofa (Pig).